The chain runs to 246 residues: ATP synthase subunit a (246 aa).

Positions 1–3 are cleaved as a propeptide — removed in mature form; sequence MFY. The next 7 helical transmembrane spans lie at 21-41, 56-76, 82-102, 113-133, 138-158, 184-204, and 206-226; these read LTFSITNYTLYLIIVSLIIIF, WGVSVIAIYDTILNLVNGQIG, YFPLIFTIFNFILIANLISMI, VAVVSFSLTLWIGNVVLGLYL, FFALFVPSGTPLALVPVLVLI, LMLILGSLIISLMSSSFLGFV, and GIIPILAVVAITILEFGIAII.

Belongs to the ATPase A chain family. F-type ATPases have 2 components, CF(1) - the catalytic core - and CF(0) - the membrane proton channel. CF(1) has five subunits: alpha(3), beta(3), gamma(1), delta(1), epsilon(1). CF(0) has three main subunits: a, b and c.

The protein resides in the mitochondrion inner membrane. In terms of biological role, mitochondrial membrane ATP synthase (F(1)F(0) ATP synthase or Complex V) produces ATP from ADP in the presence of a proton gradient across the membrane which is generated by electron transport complexes of the respiratory chain. F-type ATPases consist of two structural domains, F(1) - containing the extramembraneous catalytic core and F(0) - containing the membrane proton channel, linked together by a central stalk and a peripheral stalk. During catalysis, ATP synthesis in the catalytic domain of F(1) is coupled via a rotary mechanism of the central stalk subunits to proton translocation. Key component of the proton channel; it may play a direct role in the translocation of protons across the membrane. The protein is ATP synthase subunit a (ATP6) of Candida parapsilosis (Yeast).